The chain runs to 224 residues: Processed variable antigen (224 aa).

17 repeat units span residues 1–6 (ETGESK), 7–12 (ETGESK), 13–18 (ETGESK), 19–24 (ETGESK), 25–30 (ETGESK), 31–36 (ETGESK), 37–42 (ETGESK), 43–48 (ETGESK), 49–54 (ETGESK), 55–60 (ETGESK), 61–66 (ETGESK), 67–72 (ETGESK), 73–78 (ETGESK), 79–84 (ETGESK), 85–90 (ETGESK), 91–96 (ETGESK), and 97–102 (ETGESK). The segment at 1–102 (ETGESKETGE…GESKETGESK (102 aa)) is 17 X 6 AA tandem repeats of E-T-G-E-S-K. Positions 1 to 137 (ETGESKETGE…TEESKDREGN (137 aa)) are enriched in basic and acidic residues. Residues 1–224 (ETGESKETGE…KKADNKKKKK (224 aa)) are disordered. Positions 144 to 153 (ENSENSNVTS) are enriched in low complexity. Composition is skewed to basic and acidic residues over residues 156–173 (EETK…EKLG) and 185–217 (EDPK…EKKA).

The polypeptide is Processed variable antigen (Plasmodium falciparum).